The chain runs to 522 residues: Glutamyl-tRNA(Gln) amidotransferase subunit A (522 aa).

Residues Lys-88 and Ser-163 each act as charge relay system in the active site. Catalysis depends on Ser-187, which acts as the Acyl-ester intermediate.

This sequence belongs to the amidase family. GatA subfamily. In terms of assembly, heterotrimer of A, B and C subunits.

The catalysed reaction is L-glutamyl-tRNA(Gln) + L-glutamine + ATP + H2O = L-glutaminyl-tRNA(Gln) + L-glutamate + ADP + phosphate + H(+). Functionally, allows the formation of correctly charged Gln-tRNA(Gln) through the transamidation of misacylated Glu-tRNA(Gln) in organisms which lack glutaminyl-tRNA synthetase. The reaction takes place in the presence of glutamine and ATP through an activated gamma-phospho-Glu-tRNA(Gln). In Paenarthrobacter aurescens (strain TC1), this protein is Glutamyl-tRNA(Gln) amidotransferase subunit A.